The sequence spans 116 residues: NAD(P)H-quinone oxidoreductase subunit M (116 aa).

Belongs to the complex I NdhM subunit family. NDH-1 can be composed of about 15 different subunits; different subcomplexes with different compositions have been identified which probably have different functions.

The protein localises to the cellular thylakoid membrane. It catalyses the reaction a plastoquinone + NADH + (n+1) H(+)(in) = a plastoquinol + NAD(+) + n H(+)(out). The catalysed reaction is a plastoquinone + NADPH + (n+1) H(+)(in) = a plastoquinol + NADP(+) + n H(+)(out). NDH-1 shuttles electrons from an unknown electron donor, via FMN and iron-sulfur (Fe-S) centers, to quinones in the respiratory and/or the photosynthetic chain. The immediate electron acceptor for the enzyme in this species is believed to be plastoquinone. Couples the redox reaction to proton translocation, and thus conserves the redox energy in a proton gradient. Cyanobacterial NDH-1 also plays a role in inorganic carbon-concentration. The chain is NAD(P)H-quinone oxidoreductase subunit M from Synechococcus sp. (strain RCC307).